Consider the following 151-residue polypeptide: Large ribosomal subunit protein bL9 (151 aa).

The protein belongs to the bacterial ribosomal protein bL9 family.

Binds to the 23S rRNA. The polypeptide is Large ribosomal subunit protein bL9 (Chlorobium phaeovibrioides (strain DSM 265 / 1930) (Prosthecochloris vibrioformis (strain DSM 265))).